The sequence spans 360 residues: Probable dual-specificity RNA methyltransferase RlmN (360 aa).

The Proton acceptor role is filled by Glu-91. The region spanning 97-335 (QHYGQSVCVT…CVVRQEHGTD (239 aa)) is the Radical SAM core domain. Cysteines 104 and 340 form a disulfide. Residues Cys-111, Cys-115, and Cys-118 each coordinate [4Fe-4S] cluster. S-adenosyl-L-methionine-binding positions include 163 to 164 (GE), Ser-195, 218 to 220 (SLH), and Asn-296. Residue Cys-340 is the S-methylcysteine intermediate of the active site.

This sequence belongs to the radical SAM superfamily. RlmN family. The cofactor is [4Fe-4S] cluster.

The protein localises to the cytoplasm. It catalyses the reaction adenosine(2503) in 23S rRNA + 2 reduced [2Fe-2S]-[ferredoxin] + 2 S-adenosyl-L-methionine = 2-methyladenosine(2503) in 23S rRNA + 5'-deoxyadenosine + L-methionine + 2 oxidized [2Fe-2S]-[ferredoxin] + S-adenosyl-L-homocysteine. The enzyme catalyses adenosine(37) in tRNA + 2 reduced [2Fe-2S]-[ferredoxin] + 2 S-adenosyl-L-methionine = 2-methyladenosine(37) in tRNA + 5'-deoxyadenosine + L-methionine + 2 oxidized [2Fe-2S]-[ferredoxin] + S-adenosyl-L-homocysteine. Functionally, specifically methylates position 2 of adenine 2503 in 23S rRNA and position 2 of adenine 37 in tRNAs. In Streptococcus equi subsp. equi (strain 4047), this protein is Probable dual-specificity RNA methyltransferase RlmN.